The sequence spans 1775 residues: Protein TIC 214 (1775 aa).

6 helical membrane passes run 19–39 (IINS…FSIG), 68–88 (FIAG…HLAL), 91–111 (PHTI…WNNH), 133–153 (VFLN…SSML), 176–196 (VGWL…LVWI), and 227–247 (IFSI…PSPI). The segment at 1491–1512 (KESAGQGERESDNEKKKNLESA) is disordered.

Belongs to the TIC214 family. Part of the Tic complex.

It localises to the plastid. The protein resides in the chloroplast inner membrane. In terms of biological role, involved in protein precursor import into chloroplasts. May be part of an intermediate translocation complex acting as a protein-conducting channel at the inner envelope. This chain is Protein TIC 214, found in Lobularia maritima (Sweet alyssum).